The following is a 521-amino-acid chain: Maturase K (521 aa).

The protein belongs to the intron maturase 2 family. MatK subfamily.

It localises to the plastid. It is found in the chloroplast. Its function is as follows. Usually encoded in the trnK tRNA gene intron. Probably assists in splicing its own and other chloroplast group II introns. This Anthericum liliago (St-Bernard's lily) protein is Maturase K.